A 229-amino-acid polypeptide reads, in one-letter code: Peptidyl-tRNA hydrolase (229 aa).

Tyrosine 17 is a tRNA binding site. Histidine 22 functions as the Proton acceptor in the catalytic mechanism. TRNA is bound by residues phenylalanine 74, asparagine 76, and asparagine 122. Residues 194 to 229 (AGKTTRPRKPVRQTANAEASNNSPEASATPQNKDNT) are disordered. A compositionally biased stretch (low complexity) spans 207–223 (TANAEASNNSPEASATP).

This sequence belongs to the PTH family. As to quaternary structure, monomer.

It localises to the cytoplasm. The catalysed reaction is an N-acyl-L-alpha-aminoacyl-tRNA + H2O = an N-acyl-L-amino acid + a tRNA + H(+). Hydrolyzes ribosome-free peptidyl-tRNAs (with 1 or more amino acids incorporated), which drop off the ribosome during protein synthesis, or as a result of ribosome stalling. Its function is as follows. Catalyzes the release of premature peptidyl moieties from peptidyl-tRNA molecules trapped in stalled 50S ribosomal subunits, and thus maintains levels of free tRNAs and 50S ribosomes. The chain is Peptidyl-tRNA hydrolase from Desulfovibrio desulfuricans (strain ATCC 27774 / DSM 6949 / MB).